Reading from the N-terminus, the 220-residue chain is 7-cyano-7-deazaguanine synthase (220 aa).

10 to 20 (FSGGQDSTTCL) contributes to the ATP binding site. Positions 186, 195, 198, and 201 each coordinate Zn(2+).

This sequence belongs to the QueC family. Homodimer. The cofactor is Zn(2+).

The catalysed reaction is 7-carboxy-7-deazaguanine + NH4(+) + ATP = 7-cyano-7-deazaguanine + ADP + phosphate + H2O + H(+). It participates in purine metabolism; 7-cyano-7-deazaguanine biosynthesis. Catalyzes the ATP-dependent conversion of 7-carboxy-7-deazaguanine (CDG) to 7-cyano-7-deazaguanine (preQ(0)). This Bacillus cereus (strain AH187) protein is 7-cyano-7-deazaguanine synthase.